We begin with the raw amino-acid sequence, 146 residues long: Holo-[acyl-carrier-protein] synthase (146 aa).

Mg(2+) is bound by residues Asp8 and Glu61.

This sequence belongs to the P-Pant transferase superfamily. AcpS family. Mg(2+) serves as cofactor.

It is found in the cytoplasm. It catalyses the reaction apo-[ACP] + CoA = holo-[ACP] + adenosine 3',5'-bisphosphate + H(+). Functionally, transfers the 4'-phosphopantetheine moiety from coenzyme A to a Ser of acyl-carrier-protein. This is Holo-[acyl-carrier-protein] synthase from Rhodopseudomonas palustris (strain ATCC BAA-98 / CGA009).